A 542-amino-acid polypeptide reads, in one-letter code: Endonuclease 4 homolog (542 aa).

Disordered stretches follow at residues 89–123 (NEEI…QTSI) and 141–234 (PFFS…ENKF). 2 stretches are compositionally biased toward low complexity: residues 99 to 115 (SKKL…QQSK) and 147 to 170 (NNAS…TTTT). Residues 171–206 (TKKRNNKDEENEDDNEEEEEEEEEEEDKKSKKKTTT) are a coiled coil. The span at 179–196 (EENEDDNEEEEEEEEEEE) shows a compositional bias: acidic residues. Over residues 205-215 (TTTTTTTTTTA) the composition is skewed to low complexity. The span at 216-227 (YKKKSSPKKKKV) shows a compositional bias: basic residues. Residues 222–227 (PKKKKV) carry the Nuclear localization signal motif. Zn(2+)-binding residues include His328, His368, Glu404, Asp438, His441, His475, Asp488, His490, and Glu520.

It belongs to the AP endonuclease 2 family. Zn(2+) serves as cofactor.

It is found in the nucleus. It carries out the reaction Endonucleolytic cleavage to 5'-phosphooligonucleotide end-products.. Plays a role in DNA repair. It cleaves phosphodiester bonds at apurinic or apyrimidinic sites (AP sites) to produce new 5'-ends that are base-free deoxyribose 5-phosphate residues. The sequence is that of Endonuclease 4 homolog (apnA) from Dictyostelium discoideum (Social amoeba).